The following is a 120-amino-acid chain: uncharacterized protein (120 aa).

The stretch at 45–78 (QLISESLKIAQKDLMEVRKELRKRKIAIRETERD) forms a coiled coil.

This is an uncharacterized protein from Bacillus subtilis (strain 168).